The primary structure comprises 356 residues: Phosphoribosylformylglycinamidine cyclo-ligase (356 aa).

It belongs to the AIR synthase family.

Its subcellular location is the cytoplasm. The catalysed reaction is 2-formamido-N(1)-(5-O-phospho-beta-D-ribosyl)acetamidine + ATP = 5-amino-1-(5-phospho-beta-D-ribosyl)imidazole + ADP + phosphate + H(+). The protein operates within purine metabolism; IMP biosynthesis via de novo pathway; 5-amino-1-(5-phospho-D-ribosyl)imidazole from N(2)-formyl-N(1)-(5-phospho-D-ribosyl)glycinamide: step 2/2. The chain is Phosphoribosylformylglycinamidine cyclo-ligase from Rhizobium meliloti (strain 1021) (Ensifer meliloti).